A 668-amino-acid polypeptide reads, in one-letter code: Probable tRNA (uracil-O(2)-)-methyltransferase (668 aa).

The segment at 441–460 (QHTDSLHISTKSSLDKDDPP) is disordered. Residues 620–649 (LKTRLCWFYVHHPNGCPRVAKSCPYAHGAE) form a C3H1-type zinc finger.

The protein belongs to the TRM44 family.

It is found in the cytoplasm. The catalysed reaction is uridine(44) in tRNA(Ser) + S-adenosyl-L-methionine = 2'-O-methyluridine(44) in tRNA(Ser) + S-adenosyl-L-homocysteine + H(+). Functionally, probable adenosyl-L-methionine (AdoMet)-dependent tRNA (uracil-O(2)-)-methyltransferase. The polypeptide is Probable tRNA (uracil-O(2)-)-methyltransferase (trmt44) (Xenopus laevis (African clawed frog)).